The primary structure comprises 44 residues: Photosystem I reaction center subunit IX (44 aa).

The chain crosses the membrane as a helical span at residues 7-27 (YLSVAPVVSTIWFGALAGLLI).

It belongs to the PsaJ family.

Its subcellular location is the plastid. It is found in the chloroplast thylakoid membrane. In terms of biological role, may help in the organization of the PsaE and PsaF subunits. The protein is Photosystem I reaction center subunit IX of Cucumis sativus (Cucumber).